The primary structure comprises 287 residues: Elongation factor Ts (287 aa).

Positions Thr-80–Leu-83 are involved in Mg(2+) ion dislocation from EF-Tu.

The protein belongs to the EF-Ts family.

It is found in the cytoplasm. Associates with the EF-Tu.GDP complex and induces the exchange of GDP to GTP. It remains bound to the aminoacyl-tRNA.EF-Tu.GTP complex up to the GTP hydrolysis stage on the ribosome. The polypeptide is Elongation factor Ts (Pseudomonas putida (strain ATCC 700007 / DSM 6899 / JCM 31910 / BCRC 17059 / LMG 24140 / F1)).